We begin with the raw amino-acid sequence, 314 residues long: Olfactory receptor 1C1 (314 aa).

Topologically, residues 1–25 (MEKRNLTVVREFVLLGLPSSAEQQH) are extracellular. Residues 26–49 (LLSVLFLCMYLATTLGNMLIIATI) form a helical membrane-spanning segment. Topologically, residues 50–57 (GFDSHLHS) are cytoplasmic. Residues 58–79 (PMYFFLSNLAFVDICFTSTTVP) form a helical membrane-spanning segment. Topologically, residues 80-100 (QMVVNILTGTKTISFAGCLTQ) are extracellular. The cysteines at positions 97 and 189 are disulfide-linked. Residues 101–120 (LFFFVSFVNMDSLLLCVMAY) traverse the membrane as a helical segment. The Cytoplasmic portion of the chain corresponds to 121 to 139 (DRYVAICHPLHYTARMNLC). A helical membrane pass occupies residues 140 to 158 (LCVQLVAGLWLVTYLHALL). Residues 159 to 195 (HTVLIAQLSFCASNIIHHFFCDLNPLLQLSCSDVSFN) lie on the Extracellular side of the membrane. The chain crosses the membrane as a helical span at residues 196–219 (VMIIFAVGGLLALTPLVCILVSYG). The Cytoplasmic portion of the chain corresponds to 220–236 (LIFSTVLKITSTQGKQR). A helical membrane pass occupies residues 237–259 (AVSTCSCHLSVVVLFYGTAIAVY). Residues 260–272 (FSPSSPHMPESDT) are Extracellular-facing. The helical transmembrane segment at 273–292 (LSTIMYSMVAPMLNPFIYTL) threads the bilayer. Residues 293-314 (RNRDMKRGLQKMLLKCTVFQQQ) are Cytoplasmic-facing.

It belongs to the G-protein coupled receptor 1 family.

The protein resides in the cell membrane. Functionally, odorant receptor. This is Olfactory receptor 1C1 (OR1C1) from Homo sapiens (Human).